The primary structure comprises 2148 residues: General transcription factor 3C polypeptide 1 (2148 aa).

Residues 473-487 show a composition bias toward acidic residues; it reads GEEAFLSDSESEEES. Disordered stretches follow at residues 473–568 and 587–609; these read GEEA…FDPH and NPKEGGGSQKGGRHGSGQDKPHK. Over residues 491–502 the composition is skewed to basic residues; that stretch reads GKRRGRGSRGHS. Lys-533 participates in a covalent cross-link: Glycyl lysine isopeptide (Lys-Gly) (interchain with G-Cter in SUMO2). At Ser-666 the chain carries Phosphoserine. 2 disordered regions span residues 717–771 and 818–863; these read STAN…EKMG and TGEQ…SSWE. Basic and acidic residues-rich tracts occupy residues 759 to 770 and 825 to 835; these read ESTRVKKTDEKM and HSERKTGKQEP. Residues Lys-769 and Lys-832 each participate in a glycyl lysine isopeptide (Lys-Gly) (interchain with G-Cter in SUMO2) cross-link. A Phosphoserine modification is found at Ser-1062. Residues 1186–1195 are compositionally biased toward basic and acidic residues; it reads EHFELDREPT. Disordered stretches follow at residues 1186–1238, 1597–1627, 1823–1881, 1893–1928, and 2127–2148; these read EHFE…KKLR, KSLGKDGGLDDDDEEEDLDEGSGTKRQSVEV, KASG…LPAK, SPRPGTEEQTEAQAQFAAPEDAGAEGPRQESQESVG, and PRPSHSCYQSSAQPSTGVATSR. Thr-1195 bears the Phosphothreonine mark. Residues 1198–1214 show a composition bias toward basic residues; the sequence is RNRKVRGGKSQKRKRLK. Residues 1228–1238 are compositionally biased toward basic and acidic residues; that stretch reads EHPEAKSKKLR. Residues 1605–1616 show a composition bias toward acidic residues; it reads LDDDDEEEDLDE. 3 positions are modified to phosphoserine: Ser-1624, Ser-1853, and Ser-1893. Residues 1903–1912 show a composition bias toward low complexity; it reads EAQAQFAAPE. Positions 2132 to 2148 are enriched in polar residues; the sequence is SCYQSSAQPSTGVATSR.

It belongs to the TFIIIC subunit 1 family. In terms of assembly, part of the TFIIIC subcomplex TFIIIC2, consisting of six subunits, GTF3C1, GTF3C2, GTF3C3, GTF3C4, GTF3C5 and GTF3C6. Interacts with IGHMBP2. Interacts with MAF1.

It is found in the nucleus. In terms of biological role, required for RNA polymerase III-mediated transcription. Component of TFIIIC that initiates transcription complex assembly on tRNA and is required for transcription of 5S rRNA and other stable nuclear and cytoplasmic RNAs. Binds to the box B promoter element. In Rattus norvegicus (Rat), this protein is General transcription factor 3C polypeptide 1 (Gtf3c1).